A 429-amino-acid chain; its full sequence is tRNA-2-methylthio-N(6)-dimethylallyladenosine synthase (429 aa).

In terms of domain architecture, MTTase N-terminal spans 1-110 (MKFFIKTYGC…IPEAVELSIK (110 aa)). Residues C10, C46, C75, C146, C150, and C153 each coordinate [4Fe-4S] cluster. The region spanning 132–364 (RNSKHHAWIT…NLQKEINKML (233 aa)) is the Radical SAM core domain. The TRAM domain maps to 366-427 (ESYLDKTVEV…AGPLYGDIIK (62 aa)).

Belongs to the methylthiotransferase family. MiaB subfamily. In terms of assembly, monomer. [4Fe-4S] cluster is required as a cofactor.

The protein resides in the cytoplasm. It catalyses the reaction N(6)-dimethylallyladenosine(37) in tRNA + (sulfur carrier)-SH + AH2 + 2 S-adenosyl-L-methionine = 2-methylsulfanyl-N(6)-dimethylallyladenosine(37) in tRNA + (sulfur carrier)-H + 5'-deoxyadenosine + L-methionine + A + S-adenosyl-L-homocysteine + 2 H(+). Catalyzes the methylthiolation of N6-(dimethylallyl)adenosine (i(6)A), leading to the formation of 2-methylthio-N6-(dimethylallyl)adenosine (ms(2)i(6)A) at position 37 in tRNAs that read codons beginning with uridine. In Thermosipho africanus (strain TCF52B), this protein is tRNA-2-methylthio-N(6)-dimethylallyladenosine synthase.